A 392-amino-acid polypeptide reads, in one-letter code: 8-amino-7-oxononanoate synthase (392 aa).

Position 21 (Arg21) interacts with substrate. 114-115 (GY) contacts pyridoxal 5'-phosphate. Position 139 (His139) interacts with substrate. Pyridoxal 5'-phosphate is bound by residues Ser187, 212–215 (DEAH), and 243–246 (TFGK). At Lys246 the chain carries N6-(pyridoxal phosphate)lysine. Thr359 lines the substrate pocket.

It belongs to the class-II pyridoxal-phosphate-dependent aminotransferase family. BioF subfamily. As to quaternary structure, homodimer. The cofactor is pyridoxal 5'-phosphate.

The catalysed reaction is 6-carboxyhexanoyl-[ACP] + L-alanine + H(+) = (8S)-8-amino-7-oxononanoate + holo-[ACP] + CO2. The protein operates within cofactor biosynthesis; biotin biosynthesis. In terms of biological role, catalyzes the decarboxylative condensation of pimeloyl-[acyl-carrier protein] and L-alanine to produce 8-amino-7-oxononanoate (AON), [acyl-carrier protein], and carbon dioxide. This is 8-amino-7-oxononanoate synthase from Chlorobaculum parvum (strain DSM 263 / NCIMB 8327) (Chlorobium vibrioforme subsp. thiosulfatophilum).